The primary structure comprises 964 residues: Fanconi-associated nuclease 1 homolog (964 aa).

The tract at residues 31–56 is disordered; it reads SRSLQDDAADAEREAAAGGSSSGGGD. The segment at 63–92 adopts a UBZ4-type zinc-finger fold; sequence WVACPVCGESIRGTDYCVNTHLDICLTRGT. Residues Cys66, Cys69, His83, and Cys87 each contribute to the Zn(2+) site. Residues Glu786, Asp907, Glu926, and Val927 each coordinate Mn(2+). Positions 844–958 constitute a VRR-NUC domain; sequence GIAEEILISS…GFDVEVCKVS (115 aa).

This sequence belongs to the FAN1 family. Mn(2+) serves as cofactor. Mg(2+) is required as a cofactor.

The enzyme catalyses Hydrolytically removes 5'-nucleotides successively from the 3'-hydroxy termini of 3'-hydroxy-terminated oligonucleotides.. Nuclease required for the repair of DNA interstrand cross-links (ICL). Acts as a 5'-3' exonuclease that anchors at a cut end of DNA and cleaves DNA successively at every third nucleotide, allowing to excise an ICL from one strand through flanking incisions. This is Fanconi-associated nuclease 1 homolog from Oryza sativa subsp. japonica (Rice).